A 518-amino-acid chain; its full sequence is Protein PAC2 (518 aa).

The 45-residue stretch at 23–67 (VIKPWPSVKAYGVEWDDHSRGKHSGTIDDIHYFDVQIPNSGSFLK) folds into the CAP-Gly domain. LRR repeat units lie at residues 153 to 174 (NVKDLDLSLNLFTNINSLCEFI), 179 to 201 (NLESLNISQNKLLSGWDNLKEYD), 204 to 227 (HIKTLRLSSCGLSYKHIGKLLKSF), 229 to 252 (TLKMLDLSYNNLTSAGIQNFENEI), 255 to 276 (TLEELNISGNNLISFPLFPKNL), 277 to 298 (TLKGLNVSNNQISRAPSIAIYS), 299 to 319 (VESLDITDNKFKERSLIDDLN), and 324 to 345 (SLKNIHLSGNEFNYNGNYINVE).

The protein localises to the cytoplasm. It localises to the cytoskeleton. In terms of biological role, required for viability in the absence of the kinesin-related CIN8 mitotic motor. Seems to be involved in the assembly of alpha-tubulin. This chain is Protein PAC2 (PAC2), found in Saccharomyces cerevisiae (strain ATCC 204508 / S288c) (Baker's yeast).